The primary structure comprises 542 residues: Doublesex- and mab-3-related transcription factor A2 (542 aa).

Residues 70–117 (CARCRNHGVVSALKGHKRYCRWKDCLCAKCTLIAERQRVMAAQVALRR) constitute a DNA-binding region (DM). The interval 201-316 (LQAGRPGSPL…GGSGPRQRTP (116 aa)) is disordered. The DMA domain maps to 314–349 (RTPLDILTRVFPGHRRGVLELVLQGCGGDVVQAIEQ).

This sequence belongs to the DMRT family. As to expression, expressed in testis.

It localises to the nucleus. In terms of biological role, may be involved in sexual development. In Homo sapiens (Human), this protein is Doublesex- and mab-3-related transcription factor A2 (DMRTA2).